We begin with the raw amino-acid sequence, 204 residues long: ADP-ribosylation factor-like protein 15 (204 aa).

GTP contacts are provided by residues 39–46 (GLTGSGKT), 82–86 (ELGGA), and 142–145 (NHQD).

It belongs to the small GTPase superfamily. Arf family.

The protein is ADP-ribosylation factor-like protein 15 (ARL15) of Pongo abelii (Sumatran orangutan).